We begin with the raw amino-acid sequence, 344 residues long: L-rhamnose-proton symporter (344 aa).

Helical transmembrane passes span 4–24, 38–58, 74–94, 101–121, 137–157, 175–195, 214–234, 259–279, 290–310, and 323–343; these read AITMGIFWHLIGAASAACFYA, WSVGGIVSWIILPWAISALLL, LPVFLFGAMWGIGNINYGLTM, MGIGIAIGITLIVGTLMTPII, TLLGVLVALIGVGIVTRAGQL, LVLAVMCGIFSAGMSFAMNAA, LPSYVVIMGGGAIINLGFCFI, VLLSTLGGLMWYLQFFFYAWG, ISWMLHMSFYVLCGGIVGLVL, and VLSLGCVVIIVAANIVGIGMA.

The protein belongs to the L-rhamnose transporter (TC 2.A.7.6) family.

The protein localises to the cell inner membrane. It carries out the reaction L-rhamnopyranose(in) + H(+)(in) = L-rhamnopyranose(out) + H(+)(out). In terms of biological role, uptake of L-rhamnose across the cytoplasmic membrane with the concomitant transport of protons into the cell (symport system). This is L-rhamnose-proton symporter from Escherichia coli (strain K12 / MC4100 / BW2952).